Reading from the N-terminus, the 490-residue chain is Probable glycine dehydrogenase (decarboxylating) subunit 2 (490 aa).

An N6-(pyridoxal phosphate)lysine modification is found at lysine 273.

The protein belongs to the GcvP family. C-terminal subunit subfamily. In terms of assembly, the glycine cleavage system is composed of four proteins: P, T, L and H. In this organism, the P 'protein' is a heterodimer of two subunits. Pyridoxal 5'-phosphate serves as cofactor.

The enzyme catalyses N(6)-[(R)-lipoyl]-L-lysyl-[glycine-cleavage complex H protein] + glycine + H(+) = N(6)-[(R)-S(8)-aminomethyldihydrolipoyl]-L-lysyl-[glycine-cleavage complex H protein] + CO2. Functionally, the glycine cleavage system catalyzes the degradation of glycine. The P protein binds the alpha-amino group of glycine through its pyridoxal phosphate cofactor; CO(2) is released and the remaining methylamine moiety is then transferred to the lipoamide cofactor of the H protein. This is Probable glycine dehydrogenase (decarboxylating) subunit 2 from Staphylococcus aureus (strain MRSA252).